The chain runs to 78 residues: uncharacterized protein (78 aa).

Positions 1–28 are disordered; the sequence is MGGGNAQKSAMARAKNLEKAKAAGKGSQ.

This is an uncharacterized protein from Arabidopsis thaliana (Mouse-ear cress).